A 391-amino-acid chain; its full sequence is Probable malate dehydrogenase 1 (391 aa).

68-74 lines the NAD(+) pocket; sequence GAAGQIA. Substrate-binding residues include arginine 149 and arginine 155. Residues asparagine 162, glutamine 169, and 186–188 contribute to the NAD(+) site; that span reads VGN. Substrate contacts are provided by asparagine 188 and arginine 219. The active-site Proton acceptor is the histidine 244.

This sequence belongs to the LDH/MDH superfamily. MDH type 2 family. Homodimer.

The enzyme catalyses (S)-malate + NAD(+) = oxaloacetate + NADH + H(+). Its function is as follows. Catalyzes the reversible oxidation of malate to oxaloacetate. This chain is Probable malate dehydrogenase 1 (mdhA), found in Dictyostelium discoideum (Social amoeba).